A 392-amino-acid chain; its full sequence is Cell division protein DivIB (392 aa).

A disordered region spans residues 1-87 (MSEKDNNLTP…ETQSSEAPIE (87 aa)). Residues 1–131 (MSEKDNNLTP…KGSAPLLKKM (131 aa)) lie on the Cytoplasmic side of the membrane. Residues 14-32 (KHLEYQKRKAEEAKKEKKA) are compositionally biased toward basic and acidic residues. Positions 58 to 76 (TRDEAESAELLEEGFETNN) are enriched in acidic residues. The chain crosses the membrane as a helical span at residues 132–152 (WPALAIVVLVFVGSLYLISPL). Positions 153–224 (SKISTFSVSG…NRFEAIVKEH (72 aa)) constitute a POTRA domain. Over 153-392 (SKISTFSVSG…TAQSTTTSSN (240 aa)) the chain is Extracellular. Residues 368-392 (ISAQNAKKTDASSENTAQSTTTSSN) are disordered.

It belongs to the FtsQ/DivIB family. DivIB subfamily.

The protein resides in the cell membrane. Its function is as follows. Cell division protein that may be involved in stabilizing or promoting the assembly of the division complex. The protein is Cell division protein DivIB of Lactococcus lactis subsp. lactis (strain IL1403) (Streptococcus lactis).